The chain runs to 407 residues: Phosphopentomutase (407 aa).

Positions 11, 305, 310, 346, 347, and 358 each coordinate Mn(2+).

It belongs to the phosphopentomutase family. It depends on Mn(2+) as a cofactor.

Its subcellular location is the cytoplasm. It carries out the reaction 2-deoxy-alpha-D-ribose 1-phosphate = 2-deoxy-D-ribose 5-phosphate. The catalysed reaction is alpha-D-ribose 1-phosphate = D-ribose 5-phosphate. Its pathway is carbohydrate degradation; 2-deoxy-D-ribose 1-phosphate degradation; D-glyceraldehyde 3-phosphate and acetaldehyde from 2-deoxy-alpha-D-ribose 1-phosphate: step 1/2. Isomerase that catalyzes the conversion of deoxy-ribose 1-phosphate (dRib-1-P) and ribose 1-phosphate (Rib-1-P) to deoxy-ribose 5-phosphate (dRib-5-P) and ribose 5-phosphate (Rib-5-P), respectively. This Legionella pneumophila (strain Paris) protein is Phosphopentomutase.